Consider the following 61-residue polypeptide: Adipokinetic prohormone type 2 (61 aa).

An N-terminal signal peptide occupies residues 1–22 (MTQSCTLTLVLVVAVLAALATA). Glutamine 23 is subject to Pyrrolidone carboxylic acid. A Tryptophan amide modification is found at tryptophan 30.

This sequence belongs to the AKH/HRTH/RPCH family. As to quaternary structure, adipokinetic hormone precursor-related peptide (APRP) can form three type of disulfide-bond dimers: p1 (alpha-alpha), p2 (alpha-beta), and p3 (beta-beta).

It localises to the secreted. Its function is as follows. This hormone, released from cells in the corpora cardiaca, causes release of diglycerides from the fat body and stimulation of muscles to use these diglycerides as an energy source during energy-demanding processes. The chain is Adipokinetic prohormone type 2 from Locusta migratoria (Migratory locust).